The chain runs to 165 residues: HTH-type transcriptional regulator IscR (165 aa).

The HTH rrf2-type domain occupies 2–131 (RLTSKGRYAV…NNITLAELVN (130 aa)). A DNA-binding region (H-T-H motif) is located at residues 28–51 (LADISERQGISLSYLEQLFSRLRK). [2Fe-2S] cluster contacts are provided by Cys92, Cys98, and Cys104.

Requires [2Fe-2S] cluster as cofactor.

Its function is as follows. Regulates the transcription of several operons and genes involved in the biogenesis of Fe-S clusters and Fe-S-containing proteins. The chain is HTH-type transcriptional regulator IscR from Erwinia tasmaniensis (strain DSM 17950 / CFBP 7177 / CIP 109463 / NCPPB 4357 / Et1/99).